The sequence spans 210 residues: MNPLRVKLDALISKTSLTVTEQQREQLVGYVQLLDKWNKAYNLTSVRDPMEMLVKHILDSLVVSPHLVGERFIDVGSGPGLPGIPLAIMHPDKEFVLIDSLGKRIRFLKQVIHDLKINNVLPVQSRVEEFDPESGFDGVLSRAFASMTDMVNWCQHLPKPNAGVFLALKGVRPDDEITLLPEWCSVTDIKALQVPELEGERHLVILSRKG.

S-adenosyl-L-methionine contacts are provided by residues Gly-76, Leu-81, Val-127–Glu-128, and Arg-142.

It belongs to the methyltransferase superfamily. RNA methyltransferase RsmG family.

The protein resides in the cytoplasm. It carries out the reaction guanosine(527) in 16S rRNA + S-adenosyl-L-methionine = N(7)-methylguanosine(527) in 16S rRNA + S-adenosyl-L-homocysteine. Its function is as follows. Specifically methylates the N7 position of guanine in position 527 of 16S rRNA. This is Ribosomal RNA small subunit methyltransferase G from Vibrio cholerae serotype O1 (strain ATCC 39315 / El Tor Inaba N16961).